The sequence spans 205 residues: Meiotic nuclear division protein 1 homolog (205 aa).

Residue serine 2 is modified to N-acetylserine. The stretch at 83–173 (KRKLEVLDSQ…EAANRWTDNI (91 aa)) forms a coiled coil.

The protein belongs to the MND1 family. In terms of assembly, heterodimer with PSMC3IP/HOP2. MND1-PSMC3IP interacts with DMC1 and RAD51 and binds preferentially to dsDNA.

The protein localises to the nucleus. In terms of biological role, required for proper homologous chromosome pairing and efficient cross-over and intragenic recombination during meiosis. Stimulates both DMC1- and RAD51-mediated homologous strand assimilation, which is required for the resolution of meiotic double-strand breaks. The chain is Meiotic nuclear division protein 1 homolog from Bos taurus (Bovine).